Here is a 410-residue protein sequence, read N- to C-terminus: Proteasomal ubiquitin receptor ADRM1 (410 aa).

Residues 17–130 (SSSKYLVEFR…RKVNEYLNNP (114 aa)) form the Pru domain. Ser18 bears the Phosphoserine mark. Low complexity predominate over residues 191–257 (GSGGPATSSS…PAAQTPSLPA (67 aa)). Disordered regions lie at residues 191–264 (GSGG…SSTQ) and 381–410 (FAKA…MSLD). The region spanning 281–395 (PAMPTEGSGV…EGSDSKTDDG (115 aa)) is the DEUBAD domain. Over residues 381–401 (FAKAMEGSDSKTDDGDSKDKK) the composition is skewed to basic and acidic residues.

It belongs to the ADRM1 family. As to quaternary structure, component of the 19S proteasome regulatory particle complex. The 26S proteasome consists of a 20S core particle (CP) and two 19S regulatory subunits (RP).

It is found in the cytoplasm. Its subcellular location is the nucleus. In terms of biological role, component of the 26S proteasome, a multiprotein complex involved in the ATP-dependent degradation of ubiquitinated proteins. This complex plays a key role in the maintenance of protein homeostasis by removing misfolded or damaged proteins, which could impair cellular functions, and by removing proteins whose functions are no longer required. Therefore, the proteasome participates in numerous cellular processes, including cell cycle progression, apoptosis, or DNA damage repair. Within the complex, functions as a proteasomal ubiquitin receptor. This chain is Proteasomal ubiquitin receptor ADRM1 (adrm1b), found in Danio rerio (Zebrafish).